The sequence spans 207 residues: Serotype 2 fimbrial subunit (207 aa).

Positions 1–26 (MQIPFQRALRLCLRAALAAIASAAHA) are cleaved as a signal peptide. A disulfide bond links C42 and C85.

It belongs to the fimbrial protein family.

It localises to the fimbrium. Its function is as follows. Bordetella pertussis is the causative agent of whooping cough. An essential step in the disease process is the attachment of the bacteria to the ciliated epithelium of the respiratory tract, enabling the organism to resist normal host-clearance mechanisms. It is unclear which bacterial cell surface component are responsible for adherence but the fimbriae of B.pertussis are prime candidates for being involved in this process. The polypeptide is Serotype 2 fimbrial subunit (fim2) (Bordetella pertussis (strain Tohama I / ATCC BAA-589 / NCTC 13251)).